We begin with the raw amino-acid sequence, 361 residues long: Protein RecA (361 aa).

77-84 serves as a coordination point for ATP; it reads GPESSGKT.

The protein belongs to the RecA family.

The protein resides in the cytoplasm. Its function is as follows. Can catalyze the hydrolysis of ATP in the presence of single-stranded DNA, the ATP-dependent uptake of single-stranded DNA by duplex DNA, and the ATP-dependent hybridization of homologous single-stranded DNAs. It interacts with LexA causing its activation and leading to its autocatalytic cleavage. The chain is Protein RecA from Rhizobium rhizogenes (strain K84 / ATCC BAA-868) (Agrobacterium radiobacter).